Reading from the N-terminus, the 588-residue chain is Adenine deaminase (588 aa).

Belongs to the metallo-dependent hydrolases superfamily. Adenine deaminase family. In terms of assembly, homodimer. Mn(2+) serves as cofactor.

It catalyses the reaction adenine + H2O + H(+) = hypoxanthine + NH4(+). The chain is Adenine deaminase from Escherichia coli O45:K1 (strain S88 / ExPEC).